The sequence spans 90 residues: Protein LURE 1.5 (90 aa).

The first 19 residues, 1-19, serve as a signal peptide directing secretion; it reads MKLPIIFLTLLIFVSSCTS. Cystine bridges form between Cys58–Cys75 and Cys61–Cys82.

The protein belongs to the DEFL family. As to expression, expressed in the pistil. Detected exclusively in the synergid cells.

It is found in the secreted. Functionally, inactive pollen tube attractants guiding pollen tubes to the ovular micropyle. In Arabidopsis thaliana (Mouse-ear cress), this protein is Protein LURE 1.5.